The chain runs to 506 residues: U3 small nucleolar RNA-associated protein 18 homolog (506 aa).

The segment covering 1–11 (MSSDESSDGLE) has biased composition (acidic residues). 2 disordered regions span residues 1–44 (MSSD…SQAK) and 69–126 (AKSV…PLNH). The span at 24–37 (EQEKPAKIKRERYI) shows a compositional bias: basic and acidic residues. S102, S104, S164, and S165 each carry phosphoserine. 4 WD repeats span residues 203–242 (YAEGNATSIQFHPTSTAALVAGMNGLATIYAVDGQKNERL), 331–370 (KQEGKVKGFTWSSDSKRILVCGSTSNVSVLNLRQNLIEHI), 372–413 (MDDG…ASKA), and 469–505 (EKVGFVTSMAFSPHSSFLAFATKGKQVPLFRLKYFKG).

It belongs to the WD repeat UTP18 family. Component of U3 snoRNP complex.

It localises to the nucleus. It is found in the nucleolus. In terms of biological role, component of a nucleolar small nuclear ribonucleoprotein particle (snoRNP) thought to participate in the processing and modification of pre-ribosomal RNA. Regulation of cell size by ribosome synthesis is an important parameter for stem cell maintenance and function. The sequence is that of U3 small nucleolar RNA-associated protein 18 homolog (wcd) from Drosophila melanogaster (Fruit fly).